Here is a 93-residue protein sequence, read N- to C-terminus: Alpha-defensin 2 (93 aa).

A signal peptide spans 1 to 19; sequence MKPLVLLSALVLLSFQVQA. Positions 20-58 are excised as a propeptide; it reads DPIQNTDEETKTEEQSGEEDQAVSVSFGDREGASLQEES. Residues 23-49 form a disordered region; it reads QNTDEETKTEEQSGEEDQAVSVSFGDR. 3 disulfide bridges follow: C64–C92, C66–C81, and C71–C91.

This sequence belongs to the alpha-defensin family. Paneth cells of the small bowel.

Its subcellular location is the secreted. Its function is as follows. Has broad-spectrum antimicrobial properties. Has antibacterial activity against the Gram-positive bacterium L.monocytogenes EGD and the Gram-negative bacteria E.coli ML-35p and avirulent S.typhimurium 7953, but not against the mouse-virulent S.typhimurium 14028S. Probably contributes to the antimicrobial barrier function of the small bowel mucosa. The protein is Alpha-defensin 2 (Defa2) of Mus musculus (Mouse).